Here is a 419-residue protein sequence, read N- to C-terminus: MRKIVINGGKPLKGEVAVSGAKNSVVALIPAIILADDIVTLDGVPAISDVDSLIDIMTLMGASVECDGDSLKIDPRGVKDIPMPYGKINSLRASYYFYSSLLGRFGRAVVGLPGGCDLGPRPIDLHLKAFKAMGATVSYEGEAMRLSTEGKPLKGAHIYMDTVSVGATINTMIAASKAQGRTVIENAAREPEIIDIATLLNNMGAHIRGAGTDMIIIEGVEKLHGTRHQVIPDRIEAGSYIALAAAVGEGIKVTNVLYEHLESFISKLEEMGVRMTIEEDSVFVEKQDKLKAVSIKTSPYPGFATDLQQPITPLLLTAVGRGKIRDTIYEKRVNHVAELARMGAKISVLGGQIIYEGPNELSGAPVKATDLRAGAALVTAGLMAKGQTVITNIEFILRGYSDIIQKLNRLGADIEIVEE.

22–23 provides a ligand contact to phosphoenolpyruvate; sequence KN. Arg-92 serves as a coordination point for UDP-N-acetyl-alpha-D-glucosamine. Cys-116 functions as the Proton donor in the catalytic mechanism. Cys-116 is modified (2-(S-cysteinyl)pyruvic acid O-phosphothioketal). Residues 121-125, Asp-306, and Ile-328 each bind UDP-N-acetyl-alpha-D-glucosamine; that span reads RPIDL.

Belongs to the EPSP synthase family. MurA subfamily.

The protein localises to the cytoplasm. The catalysed reaction is phosphoenolpyruvate + UDP-N-acetyl-alpha-D-glucosamine = UDP-N-acetyl-3-O-(1-carboxyvinyl)-alpha-D-glucosamine + phosphate. It participates in cell wall biogenesis; peptidoglycan biosynthesis. Its function is as follows. Cell wall formation. Adds enolpyruvyl to UDP-N-acetylglucosamine. In Streptococcus mutans serotype c (strain ATCC 700610 / UA159), this protein is UDP-N-acetylglucosamine 1-carboxyvinyltransferase 2.